Reading from the N-terminus, the 558-residue chain is Oligo-1,6-glucosidase (558 aa).

Positions 21, 23, 25, and 29 each coordinate Ca(2+). Asp-199 functions as the Nucleophile in the catalytic mechanism. Glu-255 (proton donor) is an active-site residue.

Belongs to the glycosyl hydrolase 13 family.

The protein localises to the cytoplasm. The enzyme catalyses Hydrolysis of (1-&gt;6)-alpha-D-glucosidic linkages in some oligosaccharides produced from starch and glycogen by alpha-amylase, and in isomaltose.. This is Oligo-1,6-glucosidase (malL) from Bacillus cereus.